A 262-amino-acid polypeptide reads, in one-letter code: Type III pantothenate kinase (262 aa).

Residue 9 to 16 participates in ATP binding; that stretch reads DAGNSRIK. Substrate is bound by residues Y96 and 103–106; that span reads GSDR. D105 (proton acceptor) is an active-site residue. T129 provides a ligand contact to ATP. A substrate-binding site is contributed by T189.

This sequence belongs to the type III pantothenate kinase family. Homodimer. NH4(+) is required as a cofactor. Requires K(+) as cofactor.

The protein localises to the cytoplasm. The catalysed reaction is (R)-pantothenate + ATP = (R)-4'-phosphopantothenate + ADP + H(+). It participates in cofactor biosynthesis; coenzyme A biosynthesis; CoA from (R)-pantothenate: step 1/5. In terms of biological role, catalyzes the phosphorylation of pantothenate (Pan), the first step in CoA biosynthesis. The chain is Type III pantothenate kinase from Burkholderia multivorans (strain ATCC 17616 / 249).